A 244-amino-acid chain; its full sequence is Tubulin-folding cofactor B (244 aa).

An N-acetylmethionine modification is found at M1. Position 65 is a phosphoserine; by PAK1 (S65). Y98 is subject to Phosphotyrosine. S110 is subject to Phosphoserine. At S128 the chain carries Phosphoserine; by PAK1. One can recognise a CAP-Gly domain in the interval 183–225 (GLTDFKPGYWVGVRYDEPLGKNDGSVNGKRYFECQAKYGAFVK). The residue at position 219 (K219) is an N6-acetyllysine.

The protein belongs to the TBCB family. In terms of assembly, supercomplex made of cofactors A to E. Cofactors A and D function by capturing and stabilizing tubulin in a quasi-native conformation. Cofactor E binds to the cofactor D-tubulin complex; interaction with cofactor C then causes the release of tubulin polypeptides that are committed to the native state. Cofactors B and E can form a heterodimer which binds to alpha-tubulin and enhances their ability to dissociate tubulin heterodimers. Interacts with GAN. Interacts with DCTN1. In terms of processing, phosphorylation by PAK1 is required for normal function. Post-translationally, ubiquitinated in the presence of GAN which targets it for degradation by the proteasome. Widely expressed with highest levels in brain. Broadly distributed throughout the neonate brain but restricted mainly to ependymary cells in the adult brain where it is concentrated in the cilia.

The protein resides in the cytoplasm. The protein localises to the cytoskeleton. Its function is as follows. Binds to alpha-tubulin folding intermediates after their interaction with cytosolic chaperonin in the pathway leading from newly synthesized tubulin to properly folded heterodimer. Involved in regulation of tubulin heterodimer dissociation. May function as a negative regulator of axonal growth. The polypeptide is Tubulin-folding cofactor B (Tbcb) (Mus musculus (Mouse)).